The chain runs to 193 residues: Adenine phosphoribosyltransferase (193 aa).

Belongs to the purine/pyrimidine phosphoribosyltransferase family. As to quaternary structure, homodimer.

The protein localises to the cytoplasm. The catalysed reaction is AMP + diphosphate = 5-phospho-alpha-D-ribose 1-diphosphate + adenine. The protein operates within purine metabolism; AMP biosynthesis via salvage pathway; AMP from adenine: step 1/1. In terms of biological role, catalyzes a salvage reaction resulting in the formation of AMP, that is energically less costly than de novo synthesis. In Chromobacterium violaceum (strain ATCC 12472 / DSM 30191 / JCM 1249 / CCUG 213 / NBRC 12614 / NCIMB 9131 / NCTC 9757 / MK), this protein is Adenine phosphoribosyltransferase.